Reading from the N-terminus, the 671-residue chain is cGMP-dependent protein kinase 1 (671 aa).

Ser2 is subject to N-acetylserine. Residues 2–59 (SELEEDFAKILMLKEERIKELEKRLSEKEEEIQELKRKLHKCQSVLPVPSTHIGPRTT) adopt a coiled-coil conformation. Positions 2 to 102 (SELEEDFAKI…LIKEAILDND (101 aa)) are required for dimerization. A leucine-zipper region spans residues 9 to 44 (AKILMLKEERIKELEKRLSEKEEEIQELKRKLHKCQ). The tract at residues 50-75 (PSTHIGPRTTRAQGISAEPQTYRSFH) is autoinhibitory domain. Thr59 is subject to Phosphothreonine; by autocatalysis. The tract at residues 103–220 (FMKNLELSQI…EYMEFLKSVP (118 aa)) is cGMP-binding, high affinity. Residues 167-170 (GELA) and 177-178 (RT) each bind 3',5'-cyclic AMP. 3',5'-cyclic GMP is bound by residues 167–170 (GELA), 177–178 (RT), Arg282, 291–294 (GEKA), 301–302 (RT), and Tyr336. Positions 221–341 (TFQSLPEEIL…SNKAYEDAEA (121 aa)) are cGMP-binding, low affinity. Positions 360–619 (FNIIDTLGVG…VKDIQKHKWF (260 aa)) constitute a Protein kinase domain. Residues 366 to 374 (LGVGGFGRV) and Lys390 contribute to the ATP site. Asp484 acts as the Proton acceptor in catalysis. Thr515 is modified (phosphothreonine). The 52-residue stretch at 620–671 (EGFNWEGLRKGTLTPPIIPSVASPTDTSNFDSFPEDNDEPPPDDNSGWDIDF) folds into the AGC-kinase C-terminal domain. The segment at 635 to 671 (PIIPSVASPTDTSNFDSFPEDNDEPPPDDNSGWDIDF) is disordered. Residues 652 to 661 (FPEDNDEPPP) show a composition bias toward acidic residues.

Belongs to the protein kinase superfamily. AGC Ser/Thr protein kinase family. cGMP subfamily. In terms of assembly, isoform alpha: parallel homodimer or heterodimer and also heterotetramer. Interacts directly with PPP1R12A. Non-covalent dimer of dimer of PRKG1-PRKG1 and PPP1R12A-PPP1R12A. This interaction targets PRKG1 to stress fibers to mediate smooth muscle cell relaxation and vasodilation in responses to rises in cGMP. Isoform beta: antiparallel homodimer. Part of cGMP kinase signaling complex at least composed of ACTA2/alpha-actin, CNN1/calponin H1, PLN/phospholamban, PRKG1 and ITPR1. Interacts with IRAG1. Forms a stable complex with ITPR1, IRAG1, and isoform beta of PRKG1. Interacts with TRPC7 (via ankyrin repeat domain). Isoform alpha interacts with RGS2. Interacts with GTF2I. Autophosphorylation increases kinase activity. In terms of processing, 65 kDa monomer is produced by proteolytic cleavage. High concentrations are detected in various smooth muscle: lung, rumen, trachea, aorta, uterus and stomach. Isoform alpha is expressed predominantly in heart, cerebellum and lung, whereas the beta isoform is expressed in high concentrations in trachea, aorta, stomach and uterus.

It is found in the cytoplasm. The enzyme catalyses L-seryl-[protein] + ATP = O-phospho-L-seryl-[protein] + ADP + H(+). It catalyses the reaction L-threonyl-[protein] + ATP = O-phospho-L-threonyl-[protein] + ADP + H(+). Its activity is regulated as follows. In the absence of cGMP, PRKG1 activity is suppressed by autoinhibitory contacts. Functionally, serine/threonine protein kinase that acts as a key mediator of the nitric oxide (NO)/cGMP signaling pathway. GMP binding activates PRKG1, which phosphorylates serines and threonines on many cellular proteins. Numerous protein targets for PRKG1 phosphorylation are implicated in modulating cellular calcium, but the contribution of each of these targets may vary substantially among cell types. Proteins that are phosphorylated by PRKG1 regulate platelet activation and adhesion, smooth muscle contraction, cardiac function, gene expression, feedback of the NO-signaling pathway, and other processes involved in several aspects of the CNS like axon guidance, hippocampal and cerebellar learning, circadian rhythm and nociception. Smooth muscle relaxation is mediated through lowering of intracellular free calcium, by desensitization of contractile proteins to calcium, and by decrease in the contractile state of smooth muscle or in platelet activation. Regulates intracellular calcium levels via several pathways: phosphorylates IRAG1 and inhibits IP3-induced Ca(2+) release from intracellular stores, phosphorylation of KCNMA1 (BKCa) channels decreases intracellular Ca(2+) levels, which leads to increased opening of this channel. PRKG1 phosphorylates the canonical transient receptor potential channel (TRPC) family which inactivates the associated inward calcium current. Another mode of action of NO/cGMP/PKGI signaling involves PKGI-mediated inactivation of the Ras homolog gene family member A (RhoA). Phosphorylation of RHOA by PRKG1 blocks the action of this protein in myriad processes: regulation of RHOA translocation; decreasing contraction; controlling vesicle trafficking, reduction of myosin light chain phosphorylation resulting in vasorelaxation. Activation of PRKG1 by NO signaling also alters gene expression in a number of tissues. In smooth muscle cells, increased cGMP and PRKG1 activity influence expression of smooth muscle-specific contractile proteins, levels of proteins in the NO/cGMP signaling pathway, down-regulation of the matrix proteins osteopontin and thrombospondin-1 to limit smooth muscle cell migration and phenotype. Regulates vasodilator-stimulated phosphoprotein (VASP) functions in platelets and smooth muscle. The sequence is that of cGMP-dependent protein kinase 1 (PRKG1) from Bos taurus (Bovine).